The chain runs to 267 residues: Small ribosomal subunit protein uS2 (267 aa).

A disordered region spans residues 226–267 (AAAPNSASVREEEFSAESADEGKGRRAPAKKGEKKADAPAAE). Residues 245–267 (DEGKGRRAPAKKGEKKADAPAAE) show a composition bias toward basic and acidic residues.

This sequence belongs to the universal ribosomal protein uS2 family.

This chain is Small ribosomal subunit protein uS2, found in Xanthomonas oryzae pv. oryzae (strain MAFF 311018).